Here is a 627-residue protein sequence, read N- to C-terminus: RNA interference defective protein 10 (627 aa).

Disordered stretches follow at residues 1 to 31 (MSNHRSNFRDYQREGIRANNAGTSGDAVRQN), 467 to 487 (QRDTDEQYDVHQEGPSNHDQY), and 523 to 589 (SSVR…SEDY). Composition is skewed to basic and acidic residues over residues 7–16 (NFRDYQREGI), 467–478 (QRDTDEQYDVHQ), and 526–537 (REPEHPSARSRD).

It belongs to the maelstrom family. In terms of assembly, interacts with rde-11 (via RING-type zinc finger domain). Interacts with ergo-1.

In terms of biological role, in complex with rde-11, required in the endogenous and exogenous siRNA pathway for biogenesis and accumulation of secondary small interfering RNA (siRNA) intermediates, such as 22G-siRNAs derived from ergo-1 targets. The sequence is that of RNA interference defective protein 10 from Caenorhabditis elegans.